A 316-amino-acid polypeptide reads, in one-letter code: Beta-ketoacyl-[acyl-carrier-protein] synthase III (316 aa).

Residues C112 and H243 contribute to the active site. An ACP-binding region spans residues 244–248; that stretch reads QANLR. The active site involves N273.

It belongs to the thiolase-like superfamily. FabH family. As to quaternary structure, homodimer.

It is found in the cytoplasm. The catalysed reaction is malonyl-[ACP] + acetyl-CoA + H(+) = 3-oxobutanoyl-[ACP] + CO2 + CoA. Its pathway is lipid metabolism; fatty acid biosynthesis. In terms of biological role, catalyzes the condensation reaction of fatty acid synthesis by the addition to an acyl acceptor of two carbons from malonyl-ACP. Catalyzes the first condensation reaction which initiates fatty acid synthesis and may therefore play a role in governing the total rate of fatty acid production. Possesses both acetoacetyl-ACP synthase and acetyl transacylase activities. Its substrate specificity determines the biosynthesis of branched-chain and/or straight-chain of fatty acids. This is Beta-ketoacyl-[acyl-carrier-protein] synthase III from Histophilus somni (strain 2336) (Haemophilus somnus).